The following is a 448-amino-acid chain: RuvB-like 2 (448 aa).

73–80 (GEPGAGKT) provides a ligand contact to ATP.

This sequence belongs to the RuvB family. As to quaternary structure, forms homohexameric rings. May form a dodecamer with ruvb-1 made of two stacked hexameric rings. In terms of tissue distribution, expressed in gonadal cells.

It localises to the cytoplasm. Its subcellular location is the nucleus. The enzyme catalyses ATP + H2O = ADP + phosphate + H(+). Possesses single-stranded DNA-stimulated ATPase and ATP-dependent DNA helicase (5' to 3') activity suggesting a role in nuclear processes such as recombination and transcription. May participate in several chromatin remodeling complexes that mediate the ATP-dependent exchange of histones and remodel chromatin by shifting nucleosomes. Involvement in these complexes is likely required for transcriptional activation of selected genes and DNA repair in response to DNA damage. Has a role in gonadal development. Involved in the endoplasmic reticulum (ER)-associated degradation (ERAD) pathway where it negatively regulates expression of ER stress response genes. Specifically, negatively controls the expression of ER homeostasis regulator ckb-2 in a cdc-48.1/2-dependent manner. The protein is RuvB-like 2 of Caenorhabditis elegans.